Consider the following 189-residue polypeptide: Xanthine phosphoribosyltransferase (189 aa).

The xanthine site is built by leucine 20 and asparagine 27. 128-132 (ANGEA) provides a ligand contact to 5-phospho-alpha-D-ribose 1-diphosphate. Position 156 (lysine 156) interacts with xanthine.

This sequence belongs to the purine/pyrimidine phosphoribosyltransferase family. Xpt subfamily. As to quaternary structure, homodimer.

It is found in the cytoplasm. The catalysed reaction is XMP + diphosphate = xanthine + 5-phospho-alpha-D-ribose 1-diphosphate. The protein operates within purine metabolism; XMP biosynthesis via salvage pathway; XMP from xanthine: step 1/1. In terms of biological role, converts the preformed base xanthine, a product of nucleic acid breakdown, to xanthosine 5'-monophosphate (XMP), so it can be reused for RNA or DNA synthesis. In Lactobacillus delbrueckii subsp. bulgaricus (strain ATCC 11842 / DSM 20081 / BCRC 10696 / JCM 1002 / NBRC 13953 / NCIMB 11778 / NCTC 12712 / WDCM 00102 / Lb 14), this protein is Xanthine phosphoribosyltransferase.